The primary structure comprises 186 residues: Protein GrpE (186 aa).

Residues 1–13 (MSENTQPEQNQPL) are compositionally biased toward polar residues. Residues 1 to 22 (MSENTQPEQNQPLTGAPSPEEL) are disordered.

Belongs to the GrpE family. Homodimer.

It localises to the cytoplasm. Functionally, participates actively in the response to hyperosmotic and heat shock by preventing the aggregation of stress-denatured proteins, in association with DnaK and GrpE. It is the nucleotide exchange factor for DnaK and may function as a thermosensor. Unfolded proteins bind initially to DnaJ; upon interaction with the DnaJ-bound protein, DnaK hydrolyzes its bound ATP, resulting in the formation of a stable complex. GrpE releases ADP from DnaK; ATP binding to DnaK triggers the release of the substrate protein, thus completing the reaction cycle. Several rounds of ATP-dependent interactions between DnaJ, DnaK and GrpE are required for fully efficient folding. The polypeptide is Protein GrpE (Polaromonas sp. (strain JS666 / ATCC BAA-500)).